A 1390-amino-acid chain; its full sequence is Contactin (1390 aa).

Residues 1–18 (MLAKIGLLASILVLNLVG) form the signal peptide. A disordered region spans residues 25–67 (SENLPDPDPQSGQQPQNYQPSYNKDYSPRYNPLYTGQQSADPN). Over residues 58 to 67 (YTGQQSADPN) the composition is skewed to polar residues. 6 Ig-like C2-type domains span residues 362 to 463 (PYFV…AHLN), 468 to 561 (MEFN…LRVT), 576 to 656 (PKVF…IYIN), 661 to 745 (PQFT…TSFS), 756 to 843 (PSFK…ARVI), and 848 to 939 (IRFI…TSVS). A glycan (N-linked (GlcNAc...) asparagine) is linked at N369. 4 disulfide bridges follow: C388–C446, C489–C540, C593–C640, and C682–C734. 5 N-linked (GlcNAc...) asparagine glycosylation sites follow: N537, N604, N629, N691, and N774. 2 disulfides stabilise this stretch: C779-C827 and C870-C923. N-linked (GlcNAc...) asparagine glycosylation is found at N912, N986, and N991. 4 consecutive Fibronectin type-III domains span residues 946-1048 (APGG…TYED), 1053-1151 (APRN…SAED), 1156-1254 (APQK…TYRK), and 1259-1357 (PPSS…MGKT). Residues N1166, N1171, and N1307 are each glycosylated (N-linked (GlcNAc...) asparagine). A1362 carries GPI-anchor amidated alanine lipidation. Residues 1363–1390 (NTRHGHNINTALILSTLLLISTFLYTSQ) constitute a propeptide, removed in mature form.

The protein belongs to the immunoglobulin superfamily. Contactin family. In terms of assembly, forms a complex with Nrg and Nrx. Forms a complex composed of septa junction proteins Nrx-IV/Nrx, Tsf2/MTf, Cont and Nrg during late embryogenesis. N-glycosylated. Expressed in ectodermally derived epithelial cells from stage 12. All these tissues, such as epidermis, hindgut, foregut, salivary glands and trachea, which contain pleated septate junctions. Expressed by ectodermally derived epithelial cells and along peripheral nerves. Not present in midline glial cells. Expressed in epithelial cells and glial cells of peripheral nerves.

The protein resides in the cell membrane. The protein localises to the cell junction. It is found in the septate junction. In terms of biological role, required for organization of septate junctions and paracellular barrier functions. Septate junctions, which are the equivalent of vertebrates tight junctions, are characterized by regular arrays of transverse structures that span the intermembrane space and form a physical barrier to diffusion. This chain is Contactin (Cont), found in Drosophila melanogaster (Fruit fly).